A 294-amino-acid chain; its full sequence is Sarcotoxin II-2 (294 aa).

The N-terminal stretch at Met1–Ala22 is a signal peptide. Positions Tyr23–Pro24 are cleaved as a propeptide — removed by a dipeptidylpeptidase. Pyrrolidone carboxylic acid is present on Gln25. Arginine amide is present on Arg293.

It belongs to the attacin/sarcotoxin-2 family. In terms of tissue distribution, synthesized by the fat body and is eventually secreted into the hemolymph.

It is found in the secreted. Its function is as follows. Sarcotoxin II is an antibacterial protein which plays a role in the inflammatory response of this insect. The main effect of sarcotoxin II on E.coli may be the inhibition of cell wall synthesis, including septum formation. The sequence is that of Sarcotoxin II-2 from Sarcophaga peregrina (Flesh fly).